The following is a 98-amino-acid chain: Keratin, high sulfur matrix protein, IIIB3 (98 aa).

Position 1 is an N-acetylalanine (alanine 1).

It belongs to the KRTAP type 3 family. Interacts with wool keratins. As to expression, wool.

Its function is as follows. In the wool cortex, wool keratin intermediate filaments are embedded in an interfilamentous matrix, consisting of hair keratin-associated proteins (KRTAP), which are essential for the formation of a rigid and resistant wool shaft through their extensive disulfide bond cross-linking with abundant cysteine residues of wool keratins. The matrix proteins include the high-sulfur and high-glycine-tyrosine keratins. This is Keratin, high sulfur matrix protein, IIIB3 from Ovis aries (Sheep).